We begin with the raw amino-acid sequence, 858 residues long: Leucine--tRNA ligase (858 aa).

The 'HIGH' region motif lies at 42-52; sequence PYPSGRLHMGH. Residues 618-622 carry the 'KMSKS' region motif; that stretch reads KMSKS. ATP is bound at residue Lys621.

This sequence belongs to the class-I aminoacyl-tRNA synthetase family.

It is found in the cytoplasm. The enzyme catalyses tRNA(Leu) + L-leucine + ATP = L-leucyl-tRNA(Leu) + AMP + diphosphate. This Aeromonas salmonicida (strain A449) protein is Leucine--tRNA ligase.